Reading from the N-terminus, the 502-residue chain is MEFSTKALDWAKAGALAAKSDCLVIGLFESQTLAGAAKALDVATKGLVARLVKLGDFEGKRGTSLLLHEVAGVGAARVLLVGLGKEADFTDRAYAEAVRTALRALASTKAASVTWTLTEHTARDKDTAWAVLTAVTLIREASYRFIERHPELKSKRDKNGTGLRKLVLAVPAADAKTASVAAARGTAIANGMDLTRDLGNLPSNICTPTYLANTARQIAKDFKLKVEVLGRKQIEALKMGAFLAVTKGSVEPPAFIVLRYEGGPAKQAPVVLVGKGITFDTGGISLKPGEGMDEMKYDMCGAASVLGTLRAVAEMGLKQNVIAVVPTCENMPSGIATKPGDVVTSMSGQTIEILNTDAEGRLILCDALTYVERFKPAVVIDVATLTGACIIALGHINTGMYARSDALADALVAAGKQSLDTAWRMPLDEEYQEQLKSNFADMGNIGGRPAGSVTAACFLARFTEKYDWAHLDIAGTAWKSGAAKGATGRPVPLLTRFLMDRG.

Positions 275 and 280 each coordinate Mn(2+). Lys-287 is a catalytic residue. Residues Asp-298, Asp-357, and Glu-359 each coordinate Mn(2+). The active site involves Arg-361.

It belongs to the peptidase M17 family. Requires Mn(2+) as cofactor.

It localises to the cytoplasm. It carries out the reaction Release of an N-terminal amino acid, Xaa-|-Yaa-, in which Xaa is preferably Leu, but may be other amino acids including Pro although not Arg or Lys, and Yaa may be Pro. Amino acid amides and methyl esters are also readily hydrolyzed, but rates on arylamides are exceedingly low.. It catalyses the reaction Release of an N-terminal amino acid, preferentially leucine, but not glutamic or aspartic acids.. In terms of biological role, presumably involved in the processing and regular turnover of intracellular proteins. Catalyzes the removal of unsubstituted N-terminal amino acids from various peptides. This is Probable cytosol aminopeptidase from Ralstonia pickettii (strain 12J).